The sequence spans 338 residues: MELRSGSVGSQAVARRMDGDSRDGGGGKDATGSEDYENLPTSASVSTHMTAGAMAGILEHSVMYPVDSVKTRMQSLSPDPKAQYTSIYGALKKIMRTEGFWRPLRGVNVMIMGAGPAHAMYFACYENMKRTLNDVFHHQGNSHLANGIAGSMATLLHDAVMNPAEVVKQRLQMYNSQHRSAISCIRTVWRTEGLGAFYRSYTTQLTMNIPFQSIHFITYEFLQEQVNPHRTYNPQSHIISGGLAGALAAAATTPLDVCKTLLNTQENVALSLANISGRLSGMANAFRTVYQLNGLAGYFKGIQARVIYQMPSTAISWSVYEFFKYFLTKRQLENRAPY.

Residues 1–42 (MELRSGSVGSQAVARRMDGDSRDGGGGKDATGSEDYENLPTS) form a disordered region. Residues 15 to 26 (RRMDGDSRDGGG) are compositionally biased toward basic and acidic residues. 3 Solcar repeats span residues 43-131 (ASVS…MKRT), 141-225 (NSHL…LQEQ), and 232-326 (YNPQ…FKYF). 6 consecutive transmembrane segments (helical) span residues 45-64 (VSTH…SVMY), 106-125 (GVNV…FACY), 143-162 (HLAN…AVMN), 200-219 (SYTT…FITY), 234-253 (PQSH…AATT), and 301-320 (GIQA…WSVY).

The protein belongs to the mitochondrial carrier (TC 2.A.29) family. As to quaternary structure, interacts with ACB10; this interaction stabilizes SLC25A37 and enhances the function of SLC25A37 to import mitochondrial iron during erythroid differentiation.

The protein resides in the mitochondrion inner membrane. It catalyses the reaction Fe(2+)(in) = Fe(2+)(out). Functionally, mitochondrial iron transporter that specifically mediates iron uptake in developing erythroid cells, thereby playing an essential role in heme biosynthesis. The polypeptide is Mitoferrin-1 (SLC25A37) (Homo sapiens (Human)).